A 141-amino-acid chain; its full sequence is Large ribosomal subunit protein uL16 (141 aa).

Belongs to the universal ribosomal protein uL16 family. In terms of assembly, part of the 50S ribosomal subunit.

In terms of biological role, binds 23S rRNA and is also seen to make contacts with the A and possibly P site tRNAs. The sequence is that of Large ribosomal subunit protein uL16 from Hydrogenobaculum sp. (strain Y04AAS1).